The primary structure comprises 174 residues: uncharacterized protein (174 aa).

This is an uncharacterized protein from Aquifex aeolicus (strain VF5).